The chain runs to 351 residues: Phosphate acyltransferase (351 aa).

The protein belongs to the PlsX family. Homodimer. Probably interacts with PlsY.

The protein localises to the cytoplasm. It catalyses the reaction a fatty acyl-[ACP] + phosphate = an acyl phosphate + holo-[ACP]. It functions in the pathway lipid metabolism; phospholipid metabolism. Its function is as follows. Catalyzes the reversible formation of acyl-phosphate (acyl-PO(4)) from acyl-[acyl-carrier-protein] (acyl-ACP). This enzyme utilizes acyl-ACP as fatty acyl donor, but not acyl-CoA. In Maricaulis maris (strain MCS10) (Caulobacter maris), this protein is Phosphate acyltransferase.